The primary structure comprises 320 residues: (+)-corvol ether B synthase/(+)-corvol ether A synthase ((2E,6E)-farnesyl diphosphate cyclizing) (320 aa).

Residues Asp78 and Asp83 each contribute to the Mg(2+) site. The DDXXXD motif motif lies at 78 to 83 (DDLFVD). Arg171 provides a ligand contact to substrate. Residues Asn217, Ser221, and Glu225 each coordinate Mg(2+).

The protein belongs to the terpene synthase family. Mg(2+) is required as a cofactor.

The catalysed reaction is (2E,6E)-farnesyl diphosphate + H2O = (+)-corvol ether B + diphosphate. It catalyses the reaction (2E,6E)-farnesyl diphosphate + H2O = (+)-corvol ether A + diphosphate. The protein operates within secondary metabolite biosynthesis; terpenoid biosynthesis. Catalyzes the conversion of (2E,6E)-farnesyl diphosphate (FPP) into (+)-corvol ether A and (+)-corvol ether B via a 1,10-cyclization, which requires isomerization of FPP to nerolidyl diphosphate (NPP) and then abstraction of the pyrophosphate from intermediate NPP leading to a (E,Z)-germacradienyl (helminthogermacradienyl) cation. The preferred substrate is (2E,6E)-farnesyl diphosphate (FPP), however geranyl diphosphate (GPP) is also able to produce small amounts of several acyclic and cyclic monoterpenes, with linalool as the main product. This is (+)-corvol ether B synthase/(+)-corvol ether A synthase ((2E,6E)-farnesyl diphosphate cyclizing) from Kitasatospora setae (strain ATCC 33774 / DSM 43861 / JCM 3304 / KCC A-0304 / NBRC 14216 / KM-6054) (Streptomyces setae).